A 226-amino-acid polypeptide reads, in one-letter code: MAPYHIRKYQDSDHRSVVDLFRRGMEEHIPATFRHMLLLPRTLLLLLGVPLTLFLASGSWLLVLLSILTLFLSLWFLAKYTWEKHVMNCLHTDMADITRTYLSSHSSCFWVAESRGQTVGMVAARPVKDPLLQKKQLQLLHLSVSLQHRREGLGKAMVRTVLQFAQMQGFSEVVLSTSMLQYAALALYQGMGFQKTGETFYTYLSRLRKSPMINLKYSLTSREGDL.

The next 2 helical transmembrane spans lie at Met-36–Ala-56 and Gly-58–Ala-78. The N-acetyltransferase domain maps to Leu-61–Thr-220.

Belongs to the camello family.

The protein localises to the nucleus membrane. It is found in the cytoplasm. The protein resides in the perinuclear region. The enzyme catalyses L-lysyl-[protein] + acetyl-CoA = N(6)-acetyl-L-lysyl-[protein] + CoA + H(+). Has histone acetyltransferase activity in vitro, with specificity for histone H4. In Mus musculus (Mouse), this protein is N-acetyltransferase family 8 member 3.